We begin with the raw amino-acid sequence, 285 residues long: 2-dehydro-3-deoxyphosphooctonate aldolase (285 aa).

It belongs to the KdsA family.

The protein localises to the cytoplasm. The enzyme catalyses D-arabinose 5-phosphate + phosphoenolpyruvate + H2O = 3-deoxy-alpha-D-manno-2-octulosonate-8-phosphate + phosphate. The protein operates within carbohydrate biosynthesis; 3-deoxy-D-manno-octulosonate biosynthesis; 3-deoxy-D-manno-octulosonate from D-ribulose 5-phosphate: step 2/3. It functions in the pathway bacterial outer membrane biogenesis; lipopolysaccharide biosynthesis. The sequence is that of 2-dehydro-3-deoxyphosphooctonate aldolase from Variovorax paradoxus (strain S110).